A 379-amino-acid chain; its full sequence is MIPALTVPLLFLCATSASPAAGRGVLVPPDPKSKLIPSTTKGTHAIAKPTPSQAALRHLMVPADNFGLEMLTDHQRTRATHPQRQGQDLALPDKTRAKTKVTLDNNTGPRKVNSLSNREALAGAQPEGRNFIPSFFGNSKVHQDRSQLSSYFQLHTKSSSLTASQNLQGRKYSRNNDYGSMDHESNRPGKMNPHREEEVVSNSTKPAWVINRQPSSVLFQRPAFRKGFDNKEMCIAECHRDKDEREAYCNSDFAVNGIVQDMESVGKESRLLTLLVSSDGLYKMNRLYISPDGFFFKVKILVTDTLNCHKPCLDFKPGVRYIIMGQIYHKRIIFPQAMQHLLGGRLRAGDGFIKSSSYVQRFNRKRGRKVLAAAHSKCR.

The N-terminal stretch at 1–17 is a signal peptide; sequence MIPALTVPLLFLCATSA. 2 disordered regions span residues 76–95 and 162–194; these read RTRA…PDKT and TASQ…MNPH. Over residues 180–194 the composition is skewed to basic and acidic residues; that stretch reads SMDHESNRPGKMNPH. Intrachain disulfides connect C234–C308, C238–C312, and C249–C378. The NTR domain occupies 234–378; sequence CIAECHRDKD…KVLAAAHSKC (145 aa).

It belongs to the UPF0450 family.

This chain is UPF0450 protein C17orf58 homolog, found in Xenopus laevis (African clawed frog).